We begin with the raw amino-acid sequence, 418 residues long: Histidine--tRNA ligase (418 aa).

Belongs to the class-II aminoacyl-tRNA synthetase family.

It localises to the cytoplasm. The enzyme catalyses tRNA(His) + L-histidine + ATP = L-histidyl-tRNA(His) + AMP + diphosphate + H(+). This chain is Histidine--tRNA ligase, found in Methanococcus vannielii (strain ATCC 35089 / DSM 1224 / JCM 13029 / OCM 148 / SB).